The chain runs to 75 residues: Cytochrome c oxidase assembly factor 5 (75 aa).

The CHCH domain maps to 28-66 (QSDCVLQEGKSPKECLKEGYCKALQVTFFECKRSILDNR). The short motif at 31–42 (CVLQEGKSPKEC) is the Cx10C motif element. 2 disulfide bridges follow: Cys-31/Cys-58 and Cys-42/Cys-48. The Cx9C motif motif lies at 48–58 (CKALQVTFFEC).

Belongs to the PET191 family.

Functionally, involved in an early step of the mitochondrial complex IV assembly process. In Xenopus laevis (African clawed frog), this protein is Cytochrome c oxidase assembly factor 5 (coa5).